A 960-amino-acid chain; its full sequence is Phosphoenolpyruvate carboxylase 1 (960 aa).

A Phosphoserine modification is found at Ser7. Residues His168 and Lys596 contribute to the active site.

Belongs to the PEPCase type 1 family. As to quaternary structure, homotetramer. Requires Mg(2+) as cofactor.

The protein resides in the cytoplasm. It catalyses the reaction oxaloacetate + phosphate = phosphoenolpyruvate + hydrogencarbonate. The protein operates within photosynthesis; C3 acid pathway. By light-reversible phosphorylation. Through the carboxylation of phosphoenolpyruvate (PEP) it forms oxaloacetate, a four-carbon dicarboxylic acid source for the tricarboxylic acid cycle. The chain is Phosphoenolpyruvate carboxylase 1 (PEPC) from Sorghum bicolor (Sorghum).